The sequence spans 280 residues: DegV domain-containing protein Mb2440c (280 aa).

Residues 3–274 enclose the DegV domain; it reads VVVVTDTSCR…AGAVGVCVDV (272 aa). Residue S89 participates in hexadecanoate binding.

Its function is as follows. May bind long-chain fatty acids, such as palmitate, and may play a role in lipid transport or fatty acid metabolism. The chain is DegV domain-containing protein Mb2440c from Mycobacterium bovis (strain ATCC BAA-935 / AF2122/97).